The primary structure comprises 135 residues: Agouti-signaling protein (135 aa).

The signal sequence occupies residues 1–22 (MNILRLLLATLLVCLCLLTAYS). A glycan (N-linked (GlcNAc...) asparagine) is linked at Asn-39. The segment at 56–101 (NKKSKKISRKEAEKKRSSKKKASMKNVAQPRRPRPPPPAPCVATRD) is disordered. 5 disulfides stabilise this stretch: Cys-96–Cys-111, Cys-103–Cys-117, Cys-110–Cys-128, Cys-114–Cys-135, and Cys-119–Cys-126. The 40-residue stretch at 96-135 (CVATRDSCKPPAPACCDPCASCQCRFFRSSCSCRVLNPTC) folds into the Agouti domain.

It localises to the secreted. In terms of biological role, involved in the regulation of melanogenesis. The binding of ASP to MC1R precludes alpha-MSH initiated signaling and thus blocks production of cAMP, leading to a down-regulation of eumelanogenesis (brown/black pigment) and thus increasing synthesis of pheomelanin (yellow/red pigment). The protein is Agouti-signaling protein (ASIP) of Felis catus (Cat).